A 200-amino-acid chain; its full sequence is Somatotropin (200 aa).

Residues 1-22 (MARVLVLLSVVVASLLFSQGAT) form the signal peptide. Position 38 (His38) interacts with Zn(2+). A disulfide bridge links Cys71 with Cys173. Glu182 is a Zn(2+) binding site. Residues Cys190 and Cys198 are joined by a disulfide bond.

It belongs to the somatotropin/prolactin family.

It localises to the secreted. Growth hormone plays an important role in growth control and is involved in the regulation of several anabolic processes. Implicated as an osmoregulatory substance important for seawater adaptation. The sequence is that of Somatotropin (gh) from Ictalurus punctatus (Channel catfish).